The primary structure comprises 665 residues: Putative phospholipid:diacylglycerol acyltransferase 2 (665 aa).

The helical transmembrane segment at 48 to 68 (LIGYLCTAWWLLLFLYHSVPV) threads the bilayer. S237 serves as the catalytic Acyl-ester intermediate. Residues D567 and H620 each act as charge relay system in the active site.

This sequence belongs to the AB hydrolase superfamily. Lipase family.

Its subcellular location is the membrane. The catalysed reaction is a glycerophospholipid + a 1,2-diacyl-sn-glycerol = a monoacylglycerophospholipid + a triacyl-sn-glycerol. This Arabidopsis thaliana (Mouse-ear cress) protein is Putative phospholipid:diacylglycerol acyltransferase 2 (PDAT2).